The following is a 292-amino-acid chain: MNKYTINDITRASGGFAMLAVDQREAMRMMFAAAGAPAPVADSVLTDFKVNAAKALSPYASAILVDQQFCYRQVVEQNAIAKSCAMIVAADEFIPGNGIPVDSVVIDRKINPLQIKQDGGKALKLLVLWRSDEDAQQRLDMVKEFNELCHSHGLVSIIEPVVRPPRRGDKFDREQAIIDAAKELGDSGADLYKVEMPLYGKGPQQELLCASQRLNDHINMPWVILSSGVDEKLFPRAVRVAMTAGASGFLAGRAVWASVVGLPDNELMLRDVCAPKLQQLGDIVDEMMAKRR.

Lysine 193 (schiff-base intermediate with substrate) is an active-site residue.

Belongs to the aldolase LacD family. As to quaternary structure, homotetramer.

The catalysed reaction is 6-deoxy-6-sulfo-D-fructose 1-phosphate = (2S)-3-sulfolactaldehyde + dihydroxyacetone phosphate. In terms of biological role, cleaves 6-deoxy-6-sulfo-D-fructose 1-phosphate (SFP) to form dihydroxyacetone phosphate (DHAP) and 3-sulfolactaldehyde (SLA). In Escherichia coli (strain K12), this protein is Sulfofructosephosphate aldolase (yihT).